The following is a 530-amino-acid chain: Phosphoenolpyruvate carboxykinase (ATP) 2 (530 aa).

Substrate-binding residues include R54, Y191, and K197. Residues K197, H216, and 232 to 240 (GLSGTGKTT) each bind ATP. Residues K197 and H216 each contribute to the Mn(2+) site. D253 is a binding site for Mn(2+). ATP contacts are provided by residues E281, R318, 437-438 (RV), and T443. R318 contacts substrate.

Belongs to the phosphoenolpyruvate carboxykinase (ATP) family. Mn(2+) serves as cofactor.

It localises to the cytoplasm. The catalysed reaction is oxaloacetate + ATP = phosphoenolpyruvate + ADP + CO2. The protein operates within carbohydrate biosynthesis; gluconeogenesis. Involved in the gluconeogenesis. Catalyzes the conversion of oxaloacetate (OAA) to phosphoenolpyruvate (PEP) through direct phosphoryl transfer between the nucleoside triphosphate and OAA. The protein is Phosphoenolpyruvate carboxykinase (ATP) 2 of Salinibacter ruber (strain DSM 13855 / M31).